A 158-amino-acid polypeptide reads, in one-letter code: Cyclic pyranopterin monophosphate synthase (158 aa).

Substrate contacts are provided by residues 74–76 (MCH) and 112–113 (ME). The active site involves aspartate 127.

This sequence belongs to the MoaC family. In terms of assembly, homohexamer; trimer of dimers.

It catalyses the reaction (8S)-3',8-cyclo-7,8-dihydroguanosine 5'-triphosphate = cyclic pyranopterin phosphate + diphosphate. Its pathway is cofactor biosynthesis; molybdopterin biosynthesis. Its function is as follows. Catalyzes the conversion of (8S)-3',8-cyclo-7,8-dihydroguanosine 5'-triphosphate to cyclic pyranopterin monophosphate (cPMP). The polypeptide is Cyclic pyranopterin monophosphate synthase (Helicobacter pylori (strain G27)).